The following is a 431-amino-acid chain: Reticulon-like protein B17 (431 aa).

2 disordered regions span residues Met1 to Val110 and Pro126 to Asp152. The segment covering Thr12–Asn26 has biased composition (polar residues). The segment covering Pro126–Lys138 has biased composition (basic residues). Residues Ser142–Asp152 are compositionally biased toward polar residues. The Reticulon domain occupies Ile168–Ile355. Transmembrane regions (helical) follow at residues Val177–Ala197, Phe202–Ser222, Tyr286–Ile306, and Phe349–Phe369. Over residues Glu382 to Gln415 the composition is skewed to acidic residues. The tract at residues Glu382–Arg422 is disordered.

Its subcellular location is the endoplasmic reticulum membrane. This chain is Reticulon-like protein B17 (RTNLB17), found in Arabidopsis thaliana (Mouse-ear cress).